The following is a 427-amino-acid chain: Endothelin-1 receptor (427 aa).

The signal sequence occupies residues 1–20; that stretch reads METFCFRVSFWVALLGCVIS. Topologically, residues 21-80 are extracellular; sequence DNPESHSTNLSTHVDDFTTFRGTEFSLVVTTHRPTNLALPSNGSMHNYCPQQTKITSAFK. Asn29 and Asn62 each carry an N-linked (GlcNAc...) asparagine glycan. Residues 81–102 traverse the membrane as a helical segment; the sequence is YINTVISCTIFIVGMVGNATLL. The Cytoplasmic segment spans residues 103–112; sequence RIIYQNKCMR. A helical transmembrane segment spans residues 113–132; that stretch reads NGPNALIASLALGDLIYVVI. Topologically, residues 133-159 are extracellular; it reads DLPINVFKLLAGRWPFENHDFGVFLCK. Cys158 and Cys239 are joined by a disulfide. A helical membrane pass occupies residues 160–181; the sequence is LFPFLQKSSVGITVLNLCALSV. Over 182 to 205 the chain is Cytoplasmic; sequence DRYRAVASWSRVQGIGIPLVTAIE. A helical membrane pass occupies residues 206–229; sequence IVSIWILSFILAIPEAIGFVMVPF. The Extracellular segment spans residues 230–256; sequence EYKGEEHKTCMLNATSKFMEFYQDVKD. The helical transmembrane segment at 257–278 threads the bilayer; that stretch reads WWLFGFYFCMPLVCTAIFYTLM. The Cytoplasmic segment spans residues 279 to 306; the sequence is TCEMLNRRNGSLRIALSEHLKQRREVAK. The chain crosses the membrane as a helical span at residues 307 to 328; it reads TVFCLVVIFALCWFPLHLSRIL. The Extracellular segment spans residues 329–347; it reads KKTVYDEMDKNRCELLSFL. Residues 348–372 traverse the membrane as a helical segment; the sequence is LLMDYIGINLATMNSCINPIALYFV. The Cytoplasmic portion of the chain corresponds to 373-427; sequence SKKFKNCFQSCLCCCCYQSKSLMTSVPMNGTSIQWKNHEQNNHNTERSSHKDSIN. A Phosphoserine modification is found at Ser425.

It belongs to the G-protein coupled receptor 1 family. Endothelin receptor subfamily. EDNRA sub-subfamily. In terms of assembly, interacts with HDAC7 and KAT5.

It is found in the cell membrane. Receptor for endothelin-1. Mediates its action by association with G proteins that activate a phosphatidylinositol-calcium second messenger system. The rank order of binding affinities for ET-A is: ET1 &gt; ET2 &gt;&gt; ET3. The protein is Endothelin-1 receptor of Sus scrofa (Pig).